We begin with the raw amino-acid sequence, 246 residues long: Lipoprotein-releasing system ATP-binding protein LolD 1 (246 aa).

In terms of domain architecture, ABC transporter spans 6-244; the sequence is LKLERIRKDL…ASVTNEAASL (239 aa). 43-50 contacts ATP; it reads GPSGSGKS.

It belongs to the ABC transporter superfamily. Lipoprotein translocase (TC 3.A.1.125) family. As to quaternary structure, the complex is composed of two ATP-binding proteins (LolD) and two transmembrane proteins (LolC and LolE).

It localises to the cell inner membrane. Functionally, part of the ABC transporter complex LolCDE involved in the translocation of mature outer membrane-directed lipoproteins, from the inner membrane to the periplasmic chaperone, LolA. Responsible for the formation of the LolA-lipoprotein complex in an ATP-dependent manner. In Chlorobium chlorochromatii (strain CaD3), this protein is Lipoprotein-releasing system ATP-binding protein LolD 1.